Here is a 904-residue protein sequence, read N- to C-terminus: Shieldin complex subunit 2 (904 aa).

The interval 1–60 (MSGGSQVHIFWGAPVAPLKMTVSQDTASLMSVADPWKKIHLLYSQHSLYLKDEKQHKNLE) is sufficient for interaction with SHLD3 and MAD2L2. The tract at residues 1-568 (MSGGSQVHIF…AYVSSKHSYL (568 aa)) is interaction with ASTE1. Residues 721–891 (KCSGVVLIQA…LQQDFSLLDF (171 aa)) are mediates interaction with SHLD1.

The protein belongs to the SHLD2 family. As to quaternary structure, component of the shieldin complex, consisting of SHLD1, SHLD2, SHLD3 and MAD2L2/REV7. Within the complex, SHLD2 forms a scaffold which interacts with a SHLD3-MAD2L2 subcomplex via its N-terminus, and with SHLD1 via its C-terminus. Interacts with TP53BP1. Interacts with RIF1. Interacts with ASTE1.

It localises to the chromosome. In terms of biological role, component of the shieldin complex, which plays an important role in repair of DNA double-stranded breaks (DSBs). During G1 and S phase of the cell cycle, the complex functions downstream of TP53BP1 to promote non-homologous end joining (NHEJ) and suppress DNA end resection. Mediates various NHEJ-dependent processes including immunoglobulin class-switch recombination, and fusion of unprotected telomeres. The sequence is that of Shieldin complex subunit 2 from Pongo abelii (Sumatran orangutan).